The sequence spans 266 residues: Glutamate racemase (266 aa).

Substrate-binding positions include 10-11 and 42-43; these read DS and YG. Catalysis depends on C73, which acts as the Proton donor/acceptor. 74–75 contacts substrate; sequence NT. C183 (proton donor/acceptor) is an active-site residue. 184–185 is a substrate binding site; it reads TH.

Belongs to the aspartate/glutamate racemases family.

The catalysed reaction is L-glutamate = D-glutamate. It functions in the pathway cell wall biogenesis; peptidoglycan biosynthesis. In terms of biological role, provides the (R)-glutamate required for cell wall biosynthesis. The sequence is that of Glutamate racemase from Lactobacillus johnsonii (strain CNCM I-12250 / La1 / NCC 533).